Consider the following 182-residue polypeptide: Bifunctional protein PyrR (182 aa).

The PRPP-binding motif lies at 99–111 (IVLVDDVLFTGRT).

This sequence belongs to the purine/pyrimidine phosphoribosyltransferase family. PyrR subfamily. In terms of assembly, homodimer and homohexamer; in equilibrium.

The enzyme catalyses UMP + diphosphate = 5-phospho-alpha-D-ribose 1-diphosphate + uracil. Functionally, regulates transcriptional attenuation of the pyrimidine nucleotide (pyr) operon by binding in a uridine-dependent manner to specific sites on pyr mRNA. This disrupts an antiterminator hairpin in the RNA and favors formation of a downstream transcription terminator, leading to a reduced expression of downstream genes. Also displays a weak uracil phosphoribosyltransferase activity which is not physiologically significant. The sequence is that of Bifunctional protein PyrR from Caldicellulosiruptor bescii (strain ATCC BAA-1888 / DSM 6725 / KCTC 15123 / Z-1320) (Anaerocellum thermophilum).